The chain runs to 152 residues: Ribosome maturation factor RimP (152 aa).

The protein belongs to the RimP family.

The protein localises to the cytoplasm. Required for maturation of 30S ribosomal subunits. The sequence is that of Ribosome maturation factor RimP from Alkalilimnicola ehrlichii (strain ATCC BAA-1101 / DSM 17681 / MLHE-1).